A 186-amino-acid chain; its full sequence is Der GTPase-activating protein YihI (186 aa).

The tract at residues M1 to T65 is disordered. Composition is skewed to basic and acidic residues over residues R9–N25 and T34–E45.

Belongs to the YihI family. In terms of assembly, interacts with Der.

A GTPase-activating protein (GAP) that modifies Der/EngA GTPase function. May play a role in ribosome biogenesis. The protein is Der GTPase-activating protein YihI of Histophilus somni (strain 129Pt) (Haemophilus somnus).